A 173-amino-acid polypeptide reads, in one-letter code: NADH-ubiquinone oxidoreductase chain 6 (173 aa).

5 consecutive transmembrane segments (helical) span residues 1 to 21 (MTYF…AVAS), 27 to 47 (YGVV…VNLG), 48 to 68 (VSFV…VVFV), 87 to 107 (VMGY…LGGF), and 139 to 159 (YGVG…FVVL).

The protein belongs to the complex I subunit 6 family.

The protein localises to the mitochondrion membrane. It carries out the reaction a ubiquinone + NADH + 5 H(+)(in) = a ubiquinol + NAD(+) + 4 H(+)(out). Functionally, core subunit of the mitochondrial membrane respiratory chain NADH dehydrogenase (Complex I) that is believed to belong to the minimal assembly required for catalysis. Complex I functions in the transfer of electrons from NADH to the respiratory chain. The immediate electron acceptor for the enzyme is believed to be ubiquinone. This is NADH-ubiquinone oxidoreductase chain 6 (MT-ND6) from Coturnix japonica (Japanese quail).